A 178-amino-acid chain; its full sequence is ATP-dependent protease subunit HslV (178 aa).

Thr5 is a catalytic residue. Na(+) is bound by residues Gly161, Cys164, and Thr167.

This sequence belongs to the peptidase T1B family. HslV subfamily. In terms of assembly, a double ring-shaped homohexamer of HslV is capped on each side by a ring-shaped HslU homohexamer. The assembly of the HslU/HslV complex is dependent on binding of ATP.

It localises to the cytoplasm. It carries out the reaction ATP-dependent cleavage of peptide bonds with broad specificity.. Its activity is regulated as follows. Allosterically activated by HslU binding. In terms of biological role, protease subunit of a proteasome-like degradation complex believed to be a general protein degrading machinery. The sequence is that of ATP-dependent protease subunit HslV from Aliarcobacter butzleri (strain RM4018) (Arcobacter butzleri).